We begin with the raw amino-acid sequence, 100 residues long: MNLTPREKDKLLISMAAMVARRRLERGVKLNYPEAIALISDFVVEGARDGRPVAELMEAGAHVITRDQVMEGIAEMIHDVQVEATFPDGTKLVTVHEPIR.

It belongs to the urease gamma subunit family. In terms of assembly, heterotrimer of UreA (gamma), UreB (beta) and UreC (alpha) subunits. Three heterotrimers associate to form the active enzyme.

Its subcellular location is the cytoplasm. It carries out the reaction urea + 2 H2O + H(+) = hydrogencarbonate + 2 NH4(+). It participates in nitrogen metabolism; urea degradation; CO(2) and NH(3) from urea (urease route): step 1/1. The polypeptide is Urease subunit gamma (Rhizobium rhizogenes (strain K84 / ATCC BAA-868) (Agrobacterium radiobacter)).